Reading from the N-terminus, the 721-residue chain is Polyphosphate kinase (721 aa).

Position 54 (Asn54) interacts with ATP. 2 residues coordinate Mg(2+): Arg379 and Arg409. Residues Thr434–Thr468 form the PLD phosphodiesterase domain. His439 (phosphohistidine intermediate) is an active-site residue. ATP-binding residues include Tyr472, Arg568, and His596.

The protein belongs to the polyphosphate kinase 1 (PPK1) family. The cofactor is Mg(2+). An intermediate of this reaction is the autophosphorylated ppk in which a phosphate is covalently linked to a histidine residue through a N-P bond.

The catalysed reaction is [phosphate](n) + ATP = [phosphate](n+1) + ADP. In terms of biological role, catalyzes the reversible transfer of the terminal phosphate of ATP to form a long-chain polyphosphate (polyP). This is Polyphosphate kinase from Staphylococcus haemolyticus (strain JCSC1435).